The following is a 153-amino-acid chain: Large ribosomal subunit protein bL9 (153 aa).

Belongs to the bacterial ribosomal protein bL9 family.

Its function is as follows. Binds to the 23S rRNA. In Gloeobacter violaceus (strain ATCC 29082 / PCC 7421), this protein is Large ribosomal subunit protein bL9.